A 421-amino-acid chain; its full sequence is Uracil permease (421 aa).

Helical transmembrane passes span 18–38 (IPLSLQHLFAMFGSTVLVPML), 41–61 (INPAICLLMNGIGTLIYIFLC), 65–85 (IPAYLGSSFAFISPVLIVIST), 89–109 (EAALSGFLVVGLVFCLIGLLV), 115–135 (GWIEIVFPPAAMGAIVAVIGL), 160–180 (PKVIAVSLVTLLTAVVGNVMF), 186–206 (IIPILISIIVGYALAAFLGIV), 232–252 (IAIIVPAALVVVAEHIGHLIV), 304–324 (VYSIWIIGGAAVMAIVLSFVG), 329–349 (LIQTIPVPVMGGVSILLFGVI), 371–391 (ILTAVVLIIGISGAAFKWGNF), and 393–413 (MKGMALATVIAILLGLFFNII).

It belongs to the nucleobase:cation symporter-2 (NCS2) (TC 2.A.40) family.

It localises to the cell membrane. Its activity is regulated as follows. Inhibited by the proton gradient disruptor carbonyl cyanide m-chlorophenylhydrazone (CCCP), but not by the sodium gradient disruptor ouabain. Both xanthine and uric acid act as competitive inhibitors of uracil transport. Its function is as follows. Specific for the uptake of uracil. Transport is probably proton-dependent. In Paenibacillus larvae subsp. larvae (strain NRRL B-3650 / LMG 16245), this protein is Uracil permease.